A 59-amino-acid chain; its full sequence is Dybowskin-1CDYa (59 aa).

The first 22 residues, methionine 1–cysteine 22, serve as a signal peptide directing secretion. The propeptide occupies glutamate 23–glutamate 44.

Belongs to the frog skin active peptide (FSAP) family. Brevinin subfamily. In terms of tissue distribution, expressed by the skin glands.

It localises to the secreted. Functionally, antimicrobial peptide. Has activity against the Gram-positive bacterium S.aureus (MIC=6 uM) and the Gram-negative bacterium E.coli (MIC=3 uM). Lacks hemolytic activity against human erythrocytes. This Rana dybowskii (Dybovsky's frog) protein is Dybowskin-1CDYa.